A 79-amino-acid polypeptide reads, in one-letter code: Acyl carrier protein (79 aa).

Positions 2–77 (SDVAERVKKI…DAIDFIKANA (76 aa)) constitute a Carrier domain. At serine 37 the chain carries O-(pantetheine 4'-phosphoryl)serine.

It belongs to the acyl carrier protein (ACP) family. Post-translationally, 4'-phosphopantetheine is transferred from CoA to a specific serine of apo-ACP by AcpS. This modification is essential for activity because fatty acids are bound in thioester linkage to the sulfhydryl of the prosthetic group.

Its subcellular location is the cytoplasm. The protein operates within lipid metabolism; fatty acid biosynthesis. Carrier of the growing fatty acid chain in fatty acid biosynthesis. The polypeptide is Acyl carrier protein (Azospirillum brasilense).